We begin with the raw amino-acid sequence, 264 residues long: Thymidylate synthase (264 aa).

R21 serves as a coordination point for dUMP. A (6R)-5,10-methylene-5,6,7,8-tetrahydrofolate-binding site is contributed by H51. 126–127 (RR) is a dUMP binding site. The active-site Nucleophile is C146. DUMP contacts are provided by residues 166–169 (RSAD), N177, and 207–209 (HLY). D169 lines the (6R)-5,10-methylene-5,6,7,8-tetrahydrofolate pocket. S263 lines the (6R)-5,10-methylene-5,6,7,8-tetrahydrofolate pocket.

Belongs to the thymidylate synthase family. Bacterial-type ThyA subfamily. As to quaternary structure, homodimer.

The protein resides in the cytoplasm. The enzyme catalyses dUMP + (6R)-5,10-methylene-5,6,7,8-tetrahydrofolate = 7,8-dihydrofolate + dTMP. Its pathway is pyrimidine metabolism; dTTP biosynthesis. Functionally, catalyzes the reductive methylation of 2'-deoxyuridine-5'-monophosphate (dUMP) to 2'-deoxythymidine-5'-monophosphate (dTMP) while utilizing 5,10-methylenetetrahydrofolate (mTHF) as the methyl donor and reductant in the reaction, yielding dihydrofolate (DHF) as a by-product. This enzymatic reaction provides an intracellular de novo source of dTMP, an essential precursor for DNA biosynthesis. This chain is Thymidylate synthase, found in Nitrosococcus oceani (strain ATCC 19707 / BCRC 17464 / JCM 30415 / NCIMB 11848 / C-107).